The following is a 542-amino-acid chain: MLO-like protein 7 (542 aa).

Residues M1–T38 lie on the Extracellular side of the membrane. Residues W39–L59 form a helical membrane-spanning segment. At Q60–K82 the chain is on the cytoplasmic side. Residues A83 to L103 form a helical membrane-spanning segment. Topologically, residues K104–H165 are extracellular. The chain crosses the membrane as a helical span at residues I166–S186. At R187–K288 the chain is on the cytoplasmic side. A helical membrane pass occupies residues L289–V309. The Extracellular segment spans residues N310–L315. Residues F316 to I336 traverse the membrane as a helical segment. Topologically, residues M337–H374 are cytoplasmic. Residues L375–Y395 form a helical membrane-spanning segment. Topologically, residues S396 to L414 are extracellular. Residues F415–V435 form a helical membrane-spanning segment. Over T436–S542 the chain is Cytoplasmic. The tract at residues E449–R470 is calmodulin-binding.

It belongs to the MLO family. As to expression, restricted to pollen, synergids, pistils and immature anthers. Also detected in seedlings, leaves, stems and inflorescens.

It localises to the cell membrane. The protein localises to the endomembrane system. Its function is as follows. May be involved in modulation of pathogen defense and leaf cell death. Activity seems to be regulated by Ca(2+)-dependent calmodulin binding and seems not to require heterotrimeric G proteins. Controls pollen tube reception in the female gametophyte synergids. In Arabidopsis thaliana (Mouse-ear cress), this protein is MLO-like protein 7 (MLO7).